The chain runs to 451 residues: UDP-N-acetylmuramoylalanine--D-glutamate ligase (451 aa).

Gly-116–Thr-122 lines the ATP pocket.

The protein belongs to the MurCDEF family.

It is found in the cytoplasm. It carries out the reaction UDP-N-acetyl-alpha-D-muramoyl-L-alanine + D-glutamate + ATP = UDP-N-acetyl-alpha-D-muramoyl-L-alanyl-D-glutamate + ADP + phosphate + H(+). It participates in cell wall biogenesis; peptidoglycan biosynthesis. Its function is as follows. Cell wall formation. Catalyzes the addition of glutamate to the nucleotide precursor UDP-N-acetylmuramoyl-L-alanine (UMA). In Clostridioides difficile (strain 630) (Peptoclostridium difficile), this protein is UDP-N-acetylmuramoylalanine--D-glutamate ligase.